A 485-amino-acid chain; its full sequence is MAPTFTNSNGQPIPEPFATQRVGQHGPLLLQDFNLIDSLAHFDRERIPERVVHAKGSGAYGVFEVTDDITDICAAKFLDTVGKKTRIFTRFSTVGGELGSADTARDPRGFATKFYTEEGNLDLVYNNTPVFFIRDPSKFPHFIHTQKRNPETHLKDANMFWDYLTSNEESIHQVMVLFSDRGTPASYREMNGYSGHTYKWSNKKGEWFYVQVHFISDQGIKTLTNEEAGALAGSNPDYAQEDLFKNIAAGNYPSWTAYIQTMTEAEAKEAEFSVFDLTKVWPHKKYPLRRFGKFTLNENPKNYFAEVEQAAFSPAHTVPYMEPSADPVLQSRLFSYADTHRHRLGTNYTQIPVNCPVTGAVFNPHMRDGAMTVNGNLGSHPNYLASDKPVEFKQFSLQEDQEVWNGAATPFHWKATPADFKQAQELWKVLKRYPNQQEHLAHNIAVHAAGADAAIQDRVFAYFGKVSQDLADAIKKEVLELSPRK.

Active-site residues include H53 and N126. A heme-binding site is contributed by Y336.

Belongs to the catalase family. In terms of assembly, homotetramer. Heme is required as a cofactor.

The protein resides in the peroxisome matrix. The catalysed reaction is 2 H2O2 = O2 + 2 H2O. Its function is as follows. Catalyzes the degradation of hydrogen peroxide (H(2)O(2)) generated by peroxisomal oxidases to water and oxygen, thereby protecting cells from the toxic effects of hydrogen peroxide. This Candida albicans (strain SC5314 / ATCC MYA-2876) (Yeast) protein is Peroxisomal catalase (CAT1).